Here is a 276-residue protein sequence, read N- to C-terminus: 1H-3-hydroxy-4-oxoquinaldine 2,4-dioxygenase (276 aa).

An AB hydrolase-1 domain is found at 28-150 (PAILLLPGWC…TLLKDPERWR (123 aa)). Substrate contacts are provided by residues 36–38 (WCH), 100–101 (HS), and Trp-160. His-251 functions as the Proton donor/acceptor in the catalytic mechanism.

The protein belongs to the AB hydrolase superfamily. None. Contrary to most other dioxygenases, this enzyme does not require a cofactor for catalysis. is required as a cofactor.

It catalyses the reaction 3-hydroxy-2-methyl-1H-quinolin-4-one + O2 = N-acetylanthranilate + CO + H(+). Ring-cleaving dioxygenase involved in quinaldine degradation and utilization. The sequence is that of 1H-3-hydroxy-4-oxoquinaldine 2,4-dioxygenase (hod) from Paenarthrobacter nitroguajacolicus (Arthrobacter nitroguajacolicus).